Reading from the N-terminus, the 100-residue chain is NADH-quinone oxidoreductase subunit K (100 aa).

The next 3 membrane-spanning stretches (helical) occupy residues 2-22 (IPLQ…LTGV), 28-48 (LLFM…AFVV), and 60-80 (VMFI…LALL).

The protein belongs to the complex I subunit 4L family. In terms of assembly, NDH-1 is composed of 13 different subunits. Subunits NuoA, H, J, K, L, M, N constitute the membrane sector of the complex.

The protein localises to the cell inner membrane. It catalyses the reaction a quinone + NADH + 5 H(+)(in) = a quinol + NAD(+) + 4 H(+)(out). NDH-1 shuttles electrons from NADH, via FMN and iron-sulfur (Fe-S) centers, to quinones in the respiratory chain. The immediate electron acceptor for the enzyme in this species is believed to be ubiquinone. Couples the redox reaction to proton translocation (for every two electrons transferred, four hydrogen ions are translocated across the cytoplasmic membrane), and thus conserves the redox energy in a proton gradient. The polypeptide is NADH-quinone oxidoreductase subunit K (Erwinia tasmaniensis (strain DSM 17950 / CFBP 7177 / CIP 109463 / NCPPB 4357 / Et1/99)).